A 184-amino-acid chain; its full sequence is Photosystem I assembly protein Ycf4 (184 aa).

Helical transmembrane passes span 21-43 and 58-80; these read NFCW…ISSY and LFFP…SSYL.

This sequence belongs to the Ycf4 family.

The protein localises to the plastid. The protein resides in the chloroplast thylakoid membrane. Its function is as follows. Seems to be required for the assembly of the photosystem I complex. This is Photosystem I assembly protein Ycf4 from Carpobrotus chilensis (Sea fig).